Here is an 843-residue protein sequence, read N- to C-terminus: Excretory canal abnormal protein 6 (843 aa).

Disordered regions lie at residues Q54–T135, T568–T601, T748–E767, and T773–V843. Composition is skewed to pro residues over residues T66–L76 and A83–I103. Residues F127 to T512 enclose the FH2 domain. 2 stretches are compositionally biased toward polar residues: residues P776–H792 and I819–R830.

It belongs to the formin homology family. Expressed in the excretory cell and mostly accumulates at the tip of the excretory cell canals.

The protein resides in the cytoplasm. The protein localises to the cytoskeleton. Functionally, constitutively active protein required for microtubule and F-actin growth, structural maintenance and organization during excretory cell tubulogenesis. The protein is Excretory canal abnormal protein 6 of Caenorhabditis elegans.